The following is a 308-amino-acid chain: Homoserine O-acetyltransferase (308 aa).

The Acyl-thioester intermediate role is filled by Cys-142. Substrate-binding residues include Lys-163 and Ser-192. The active-site Proton acceptor is the His-235. The active site involves Glu-237. Arg-249 serves as a coordination point for substrate.

Belongs to the MetA family.

The protein resides in the cytoplasm. The enzyme catalyses L-homoserine + acetyl-CoA = O-acetyl-L-homoserine + CoA. The protein operates within amino-acid biosynthesis; L-methionine biosynthesis via de novo pathway; O-acetyl-L-homoserine from L-homoserine: step 1/1. Its function is as follows. Transfers an acetyl group from acetyl-CoA to L-homoserine, forming acetyl-L-homoserine. This is Homoserine O-acetyltransferase from Rhizobium rhizogenes (strain K84 / ATCC BAA-868) (Agrobacterium radiobacter).